The primary structure comprises 232 residues: Ras-related protein RabP (232 aa).

15-22 is a binding site for GTP; sequence GNYGVGKS. The Effector region motif lies at 35–40; sequence DNTTGF. GTP contacts are provided by residues 58–62 and 118–121; these read DTSGQ and NKFD. S-geranylgeranyl cysteine attachment occurs at residues Cys229 and Cys230.

This sequence belongs to the small GTPase superfamily. Rab family.

The protein resides in the cell membrane. This chain is Ras-related protein RabP (rabP), found in Dictyostelium discoideum (Social amoeba).